Consider the following 324-residue polypeptide: Beta-ketoacyl-[acyl-carrier-protein] synthase III (324 aa).

Catalysis depends on residues Cys112 and His249. Residues 250-254 are ACP-binding; the sequence is QANRR. Asn279 is an active-site residue.

It belongs to the thiolase-like superfamily. FabH family. In terms of assembly, homodimer.

It is found in the cytoplasm. It carries out the reaction malonyl-[ACP] + acetyl-CoA + H(+) = 3-oxobutanoyl-[ACP] + CO2 + CoA. Its pathway is lipid metabolism; fatty acid biosynthesis. In terms of biological role, catalyzes the condensation reaction of fatty acid synthesis by the addition to an acyl acceptor of two carbons from malonyl-ACP. Catalyzes the first condensation reaction which initiates fatty acid synthesis and may therefore play a role in governing the total rate of fatty acid production. Possesses both acetoacetyl-ACP synthase and acetyl transacylase activities. Its substrate specificity determines the biosynthesis of branched-chain and/or straight-chain of fatty acids. In Streptococcus pyogenes serotype M1, this protein is Beta-ketoacyl-[acyl-carrier-protein] synthase III.